The primary structure comprises 213 residues: Orotate phosphoribosyltransferase (213 aa).

Residue K26 participates in 5-phospho-alpha-D-ribose 1-diphosphate binding. Residue 34 to 35 (FF) participates in orotate binding. 5-phospho-alpha-D-ribose 1-diphosphate is bound by residues 72–73 (YK), R99, K100, K103, H105, and 124–132 (DDVITAGTS). Orotate contacts are provided by T128 and R156.

Belongs to the purine/pyrimidine phosphoribosyltransferase family. PyrE subfamily. Homodimer. Requires Mg(2+) as cofactor.

The catalysed reaction is orotidine 5'-phosphate + diphosphate = orotate + 5-phospho-alpha-D-ribose 1-diphosphate. It participates in pyrimidine metabolism; UMP biosynthesis via de novo pathway; UMP from orotate: step 1/2. In terms of biological role, catalyzes the transfer of a ribosyl phosphate group from 5-phosphoribose 1-diphosphate to orotate, leading to the formation of orotidine monophosphate (OMP). In Methylococcus capsulatus (strain ATCC 33009 / NCIMB 11132 / Bath), this protein is Orotate phosphoribosyltransferase.